Consider the following 214-residue polypeptide: Large ribosomal subunit protein uL29m (214 aa).

It belongs to the universal ribosomal protein uL29 family. Component of the mitochondrial large ribosomal subunit. Mature mitochondrial ribosomes consist of a small (37S) and a large (54S) subunit. The 37S subunit contains at least 33 different proteins and 1 molecule of RNA (15S). The 54S subunit contains at least 45 different proteins and 1 molecule of RNA (21S).

It is found in the mitochondrion. This is Large ribosomal subunit protein uL29m (mrpl4) from Aspergillus terreus (strain NIH 2624 / FGSC A1156).